A 585-amino-acid chain; its full sequence is SCF E3 ubiquitin ligase complex F-box protein grrA (585 aa).

Polar residues predominate over residues 1–10 (MARSRQPTRF). 2 disordered regions span residues 1-34 (MARS…DTDF) and 41-60 (DSQS…QNDP). Residues 11–25 (SSEAPSESSSSTSPE) are compositionally biased toward low complexity. Residues 65-113 (PPIAYLPPEILISIFSKLSSPRDLLSCLLVCRIWALNCVGLLWHRPSCN) enclose the F-box domain. 13 LRR repeats span residues 147–171 (TEDV…TLTN), 172–197 (CRKL…DVSE), 198–223 (LRSL…NITG), 224–249 (CVKV…KLNG), 250–275 (VSQV…DLQE), 276–301 (CKLV…RLAH), 302–329 (CTEI…DLTA), 330–355 (CENI…VLAK), 356–381 (CKFI…HLGH), 382–407 (CSNI…DLAC), 408–432 (CSRL…GLVK), 433–465 (CQLI…HLSY), and 466–491 (CVNL…SLTG).

In terms of assembly, part of a SCF E3 ubiquitin ligase complex. Specifically expressed in ascus mother cells.

The protein localises to the cytoplasm. In terms of biological role, involved in meiosis and required for ascospore formation. Involved in substrate recognition in ubiquitin-dependent degradation. This is SCF E3 ubiquitin ligase complex F-box protein grrA (grrA) from Emericella nidulans (strain FGSC A4 / ATCC 38163 / CBS 112.46 / NRRL 194 / M139) (Aspergillus nidulans).